Consider the following 180-residue polypeptide: Large ribosomal subunit protein uL5 (180 aa).

This sequence belongs to the universal ribosomal protein uL5 family. As to quaternary structure, forms a bridge to the 30S subunit in the 70S ribosome. Part of the 50S ribosomal subunit; part of the 5S rRNA/L5/L18/L25 (CTC) subcomplex. Is known to contact the 5S rRNA, 23S rRNA and the P site tRNA.

Its function is as follows. This is one of the proteins that bind and probably mediate the attachment of the 5S RNA into the large ribosomal subunit, where it forms part of the central protuberance. In the 70S ribosome it contacts protein S13 of the 30S subunit (bridge B1b), connecting the 2 subunits; this bridge is implicated in subunit movement. Contacts the P site tRNA; the 5S rRNA and some of its associated proteins might help stabilize positioning of ribosome-bound tRNAs. The polypeptide is Large ribosomal subunit protein uL5 (rplE) (Deinococcus radiodurans (strain ATCC 13939 / DSM 20539 / JCM 16871 / CCUG 27074 / LMG 4051 / NBRC 15346 / NCIMB 9279 / VKM B-1422 / R1)).